The following is a 170-amino-acid chain: Phosphopantetheine adenylyltransferase (170 aa).

Residue Thr-18 participates in substrate binding. Residues 18–19 and His-26 contribute to the ATP site; that span reads TF. Residues Lys-50, Leu-84, and Arg-98 each coordinate substrate. ATP-binding positions include 99 to 101, Glu-109, and 134 to 140; these read GLR and WIYISSS.

The protein belongs to the bacterial CoaD family. Homohexamer. Mg(2+) serves as cofactor.

It localises to the cytoplasm. The catalysed reaction is (R)-4'-phosphopantetheine + ATP + H(+) = 3'-dephospho-CoA + diphosphate. It functions in the pathway cofactor biosynthesis; coenzyme A biosynthesis; CoA from (R)-pantothenate: step 4/5. Functionally, reversibly transfers an adenylyl group from ATP to 4'-phosphopantetheine, yielding dephospho-CoA (dPCoA) and pyrophosphate. The polypeptide is Phosphopantetheine adenylyltransferase (Desulfotalea psychrophila (strain LSv54 / DSM 12343)).